Here is a 598-residue protein sequence, read N- to C-terminus: Nuclear receptor subfamily 4 group A member 2 (598 aa).

The segment at Met-1–Tyr-22 is disordered. Residues Tyr-8–Tyr-22 show a composition bias toward low complexity. The nuclear receptor DNA-binding region spans Glu-260 to Thr-335. 2 NR C4-type zinc fingers span residues Cys-263–Cys-283 and Cys-299–Cys-323. The Bipartite nuclear localization signal (NLS1) signature appears at Phe-287–Arg-314. The disordered stretch occupies residues Ser-337–Pro-361. The short motif at Leu-338 to Lys-350 is the Nuclear localization signal (NLS1) element. Pro residues predominate over residues Pro-352–Pro-361. Residues Pro-360 to Thr-595 enclose the NR LBD domain. The nuclear export sequence (NES1) motif lies at Phe-443 to Ala-452. The nuclear export sequence (NES2) signature appears at Gln-568 to Lys-577.

This sequence belongs to the nuclear hormone receptor family. NR4 subfamily. Interacts with SFPQ, NCOR2, SIN3A and HADC1. The interaction with NCOR2 increases in the absence of PITX3. Interacts with PER2. As to expression, brain.

It is found in the cytoplasm. Its subcellular location is the nucleus. Functionally, transcriptional regulator which is important for the differentiation and maintenance of meso-diencephalic dopaminergic (mdDA) neurons during development. It is crucial for expression of a set of genes such as SLC6A3, SLC18A2, TH and DRD2 which are essential for development of mdDA neurons. The sequence is that of Nuclear receptor subfamily 4 group A member 2 (Nr4a2) from Mus musculus (Mouse).